Here is an 820-residue protein sequence, read N- to C-terminus: Leucine--tRNA ligase (820 aa).

The 'HIGH' region signature appears at 40-51 (PYPSGAGLHVGH). The 'KMSKS' region motif lies at 601-605 (KMSKS). K604 contacts ATP.

It belongs to the class-I aminoacyl-tRNA synthetase family.

Its subcellular location is the cytoplasm. The catalysed reaction is tRNA(Leu) + L-leucine + ATP = L-leucyl-tRNA(Leu) + AMP + diphosphate. This is Leucine--tRNA ligase from Chlamydia felis (strain Fe/C-56) (Chlamydophila felis).